The chain runs to 118 residues: V-type proton ATPase subunit G 1 (118 aa).

Ala-2 carries the N-acetylalanine modification. The interval 55–90 (FQSKQQAAMGSQGNLSAEVEQATRRQVQGMQSSQQR) is disordered. Polar residues-rich tracts occupy residues 56–69 (QSKQ…QGNL) and 78–89 (RRQVQGMQSSQQ).

Belongs to the V-ATPase G subunit family. In terms of assembly, V-ATPase is a heteromultimeric enzyme made up of two complexes: the ATP-hydrolytic V1 complex and the proton translocation V0 complex. The V1 complex consists of three catalytic AB heterodimers that form a heterohexamer, three peripheral stalks each consisting of EG heterodimers, one central rotor including subunits D and F, and the regulatory subunits C and H. The proton translocation complex V0 consists of the proton transport subunit a, a ring of proteolipid subunits c9c'', rotary subunit d, subunits e and f, and the accessory subunits ATP6AP1/Ac45 and ATP6AP2/PRR.

The protein localises to the apical cell membrane. Its function is as follows. Subunit of the V1 complex of vacuolar(H+)-ATPase (V-ATPase), a multisubunit enzyme composed of a peripheral complex (V1) that hydrolyzes ATP and a membrane integral complex (V0) that translocates protons. V-ATPase is responsible for acidifying and maintaining the pH of intracellular compartments and in some cell types, is targeted to the plasma membrane, where it is responsible for acidifying the extracellular environment. In aerobic conditions, involved in intracellular iron homeostasis, thus triggering the activity of Fe(2+) prolyl hydroxylase (PHD) enzymes, and leading to HIF1A hydroxylation and subsequent proteasomal degradation. The sequence is that of V-type proton ATPase subunit G 1 (ATP6V1G1) from Canis lupus familiaris (Dog).